The primary structure comprises 309 residues: Ecto-ADP-ribosyltransferase 5 (309 aa).

Positions 1–23 are cleaved as a signal peptide; the sequence is MILEDLLMVLSCLSLHALWKVRA. A disulfide bridge links C43 with C259. Residues 63 to 253 enclose the TR mART core domain; that stretch reads ALLRESWEAA…IVTLWSYDQT (191 aa). An NAD(+)-binding site is contributed by Y100. N102 carries N-linked (GlcNAc...) asparagine glycosylation. Positions 161 and 181 each coordinate NAD(+). R161 is a catalytic residue. The active site involves S184. N197 carries an N-linked (GlcNAc...) asparagine glycan. S215 provides a ligand contact to NAD(+). E222 is a catalytic residue.

The protein belongs to the Arg-specific ADP-ribosyltransferase family. In terms of tissue distribution, abundantly expressed in testis. Lower levels in cardiac and skeletal muscle.

The protein resides in the secreted. Its subcellular location is the membrane. It catalyses the reaction L-arginyl-[protein] + NAD(+) = N(omega)-(ADP-D-ribosyl)-L-arginyl-[protein] + nicotinamide + H(+). In Mus musculus (Mouse), this protein is Ecto-ADP-ribosyltransferase 5 (Art5).